A 225-amino-acid polypeptide reads, in one-letter code: Biosynthetic peptidoglycan transglycosylase (225 aa).

Residues 7–27 (SFLFKMVLILLIAPIVLVGVV) traverse the membrane as a helical segment.

Belongs to the glycosyltransferase 51 family.

It is found in the cell inner membrane. It catalyses the reaction [GlcNAc-(1-&gt;4)-Mur2Ac(oyl-L-Ala-gamma-D-Glu-L-Lys-D-Ala-D-Ala)](n)-di-trans,octa-cis-undecaprenyl diphosphate + beta-D-GlcNAc-(1-&gt;4)-Mur2Ac(oyl-L-Ala-gamma-D-Glu-L-Lys-D-Ala-D-Ala)-di-trans,octa-cis-undecaprenyl diphosphate = [GlcNAc-(1-&gt;4)-Mur2Ac(oyl-L-Ala-gamma-D-Glu-L-Lys-D-Ala-D-Ala)](n+1)-di-trans,octa-cis-undecaprenyl diphosphate + di-trans,octa-cis-undecaprenyl diphosphate + H(+). It functions in the pathway cell wall biogenesis; peptidoglycan biosynthesis. Its function is as follows. Peptidoglycan polymerase that catalyzes glycan chain elongation from lipid-linked precursors. This chain is Biosynthetic peptidoglycan transglycosylase, found in Vibrio parahaemolyticus serotype O3:K6 (strain RIMD 2210633).